We begin with the raw amino-acid sequence, 283 residues long: Thymidylate synthase (283 aa).

Arginine 22 is a binding site for dUMP. Cysteine 160 functions as the Nucleophile in the catalytic mechanism. DUMP-binding positions include 180 to 183, asparagine 191, and 221 to 223; these read RSCD and HIY. Aspartate 183 contributes to the (6R)-5,10-methylene-5,6,7,8-tetrahydrofolate binding site. Position 282 (serine 282) interacts with (6R)-5,10-methylene-5,6,7,8-tetrahydrofolate.

It belongs to the thymidylate synthase family. Bacterial-type ThyA subfamily. Homodimer.

Its subcellular location is the cytoplasm. It carries out the reaction dUMP + (6R)-5,10-methylene-5,6,7,8-tetrahydrofolate = 7,8-dihydrofolate + dTMP. It functions in the pathway pyrimidine metabolism; dTTP biosynthesis. Its function is as follows. Catalyzes the reductive methylation of 2'-deoxyuridine-5'-monophosphate (dUMP) to 2'-deoxythymidine-5'-monophosphate (dTMP) while utilizing 5,10-methylenetetrahydrofolate (mTHF) as the methyl donor and reductant in the reaction, yielding dihydrofolate (DHF) as a by-product. This enzymatic reaction provides an intracellular de novo source of dTMP, an essential precursor for DNA biosynthesis. The polypeptide is Thymidylate synthase (Aliivibrio fischeri (strain ATCC 700601 / ES114) (Vibrio fischeri)).